The sequence spans 613 residues: Ribosome-associated molecular chaperone SSB (613 aa).

The segment at 1 to 391 (MADGVFQGAI…ILTGQSTSDE (391 aa)) is nucleotide binding domain (NBD). ATP contacts are provided by residues 16 to 18 (TTY), Lys-73, 205 to 207 (GGT), 271 to 278 (ERAKRTLS), and Gly-342. An inter-domain linker region spans residues 392–402 (TKDLLLLDVAP). The interval 403–613 (LSLGVGMQGD…RVVTKAMSSR (211 aa)) is substrate binding domain (SBD). The segment at 516-612 (SEDIEKMVNQ…KRVVTKAMSS (97 aa)) is lid domain (SBDalpha). The Nuclear export signal signature appears at 574-582 (IEAALADAL).

It belongs to the heat shock protein 70 family. Ssb-type Hsp70 subfamily. Binds to ribosomes. Binds close to the ribosomal tunnel exit via contacts with both ribosomal proteins and rRNA. Directly interacts with nascent polypeptides. This interaction is dependent on the ribosome-associated complex (RAC). Interacts with SSE1. Interacts with FES1.

The protein resides in the cytoplasm. The catalysed reaction is ATP + H2O = ADP + phosphate + H(+). Its function is as follows. Ribosome-bound, Hsp70-type chaperone that assists in the cotranslational folding of newly synthesized proteins in the cytosol. Stimulates folding by interacting with nascent chains, binding to short, largely hydrophobic sequences exposed by unfolded proteins, thereby stabilizing longer, more slowly translated, and aggregation-prone nascent polypeptides and domains that cannot fold stably until fully synthesized. The Hsp70-protein substrate interaction depends on ATP-binding and on allosteric regulation between the NBD and the SBD. The ATP-bound state is characterized by a fast exchange rate of substrate (low affinity state), while in the ADP-bound state exchange is much slower (high affinity state). During the Hsp70 cycle, the chaperone switches between the ATP-bound state (open conformation) and the ADP-bound state (closed conformation) by major conformational rearrangements involving mainly the lid domain. Ssb cooperates with a specific Hsp40/Hsp70 co-chaperone termed the ribosome-associated complex (RAC), which stimulates the ATPase activity of the ribosome-associated pool of Ssbs and switches it to the high affinity substrate binding state. Hsp110 chaperone SSE1 and FES1 act as nucleotide exchange factors that cause substrate release. This chain is Ribosome-associated molecular chaperone SSB (SSB1), found in Candida glabrata (strain ATCC 2001 / BCRC 20586 / JCM 3761 / NBRC 0622 / NRRL Y-65 / CBS 138) (Yeast).